A 618-amino-acid chain; its full sequence is Arginine--tRNA ligase (618 aa).

A 'HIGH' region motif is present at residues 113-123 (ANPIHPLHIGH).

Belongs to the class-I aminoacyl-tRNA synthetase family.

The protein resides in the cytoplasm. It carries out the reaction tRNA(Arg) + L-arginine + ATP = L-arginyl-tRNA(Arg) + AMP + diphosphate. This chain is Arginine--tRNA ligase, found in Sulfolobus acidocaldarius (strain ATCC 33909 / DSM 639 / JCM 8929 / NBRC 15157 / NCIMB 11770).